Here is a 226-residue protein sequence, read N- to C-terminus: Ribonuclease 3 (226 aa).

Residues 5–127 (TFQRGDPIGH…IVAAIYLDCG (123 aa)) enclose the RNase III domain. E40 provides a ligand contact to Mg(2+). D44 is an active-site residue. Mg(2+) is bound by residues D113 and E116. E116 is an active-site residue. The 71-residue stretch at 154–224 (DPKTRLQEWL…ATLVIAQLDS (71 aa)) folds into the DRBM domain.

It belongs to the ribonuclease III family. In terms of assembly, homodimer. Mg(2+) serves as cofactor.

Its subcellular location is the cytoplasm. It carries out the reaction Endonucleolytic cleavage to 5'-phosphomonoester.. Digests double-stranded RNA. Involved in the processing of primary rRNA transcript to yield the immediate precursors to the large and small rRNAs (23S and 16S). Processes some mRNAs, and tRNAs when they are encoded in the rRNA operon. Processes pre-crRNA and tracrRNA of type II CRISPR loci if present in the organism. The polypeptide is Ribonuclease 3 (Xanthomonas axonopodis pv. citri (strain 306)).